We begin with the raw amino-acid sequence, 147 residues long: uncharacterized protein (147 aa).

In terms of domain architecture, ABM spans 50–138 (IVVAGNIKVK…LLAKPAEIKI (89 aa)).

The protein belongs to the LsrG family.

This is an uncharacterized protein from Synechocystis sp. (strain ATCC 27184 / PCC 6803 / Kazusa).